We begin with the raw amino-acid sequence, 586 residues long: Phosphomethylpyrimidine synthase (586 aa).

The disordered stretch occupies residues Met-1 to Val-33. Basic and acidic residues predominate over residues Val-22 to Val-33. Residues Asn-193, Met-222, Tyr-251, His-287, Ser-307 to Gly-309, Asp-348 to Arg-351, and Glu-387 each bind substrate. His-391 provides a ligand contact to Zn(2+). Position 414 (Tyr-414) interacts with substrate. His-455 provides a ligand contact to Zn(2+). Residues Cys-535, Cys-538, and Cys-543 each coordinate [4Fe-4S] cluster.

Belongs to the ThiC family. [4Fe-4S] cluster is required as a cofactor.

It carries out the reaction 5-amino-1-(5-phospho-beta-D-ribosyl)imidazole + S-adenosyl-L-methionine = 4-amino-2-methyl-5-(phosphooxymethyl)pyrimidine + CO + 5'-deoxyadenosine + formate + L-methionine + 3 H(+). It functions in the pathway cofactor biosynthesis; thiamine diphosphate biosynthesis. Catalyzes the synthesis of the hydroxymethylpyrimidine phosphate (HMP-P) moiety of thiamine from aminoimidazole ribotide (AIR) in a radical S-adenosyl-L-methionine (SAM)-dependent reaction. The protein is Phosphomethylpyrimidine synthase of Bacillus cereus (strain B4264).